Here is a 426-residue protein sequence, read N- to C-terminus: Glutamate-1-semialdehyde 2,1-aminomutase 2 (426 aa).

N6-(pyridoxal phosphate)lysine is present on lysine 265.

It belongs to the class-III pyridoxal-phosphate-dependent aminotransferase family. HemL subfamily. In terms of assembly, homodimer. Pyridoxal 5'-phosphate is required as a cofactor.

It is found in the cytoplasm. The enzyme catalyses (S)-4-amino-5-oxopentanoate = 5-aminolevulinate. It participates in porphyrin-containing compound metabolism; protoporphyrin-IX biosynthesis; 5-aminolevulinate from L-glutamyl-tRNA(Glu): step 2/2. The sequence is that of Glutamate-1-semialdehyde 2,1-aminomutase 2 from Lachnoclostridium phytofermentans (strain ATCC 700394 / DSM 18823 / ISDg) (Clostridium phytofermentans).